The sequence spans 340 residues: Short-chain dehydrogenase/reductase prx1 (340 aa).

5 residues coordinate NADP(+): Ile60, Lys84, Asp104, Asn131, and Lys162. Ser184 (proton donor) is an active-site residue. NADP(+) is bound by residues Tyr210 and Lys214. Tyr210 serves as the catalytic Proton acceptor. The Lowers pKa of active site Tyr role is filled by Lys214.

Belongs to the short-chain dehydrogenases/reductases (SDR) family.

Its pathway is sesquiterpene biosynthesis. Short-chain dehydrogenase/reductase; part of the gene cluster that mediates the biosynthesis of PR-toxin, a bicyclic sesquiterpene belonging to the eremophilane class and acting as a mycotoxin. The first step of the pathway is catalyzed by the aristolochene synthase which performs the cyclization of trans,trans-farnesyl diphosphate (FPP) to the bicyclic sesquiterpene aristolochene. Following the formation of aristolochene, the non-oxygenated aristolochene is converted to the trioxygenated intermediate eremofortin B, via 7-epi-neopetasone. This conversion appears to involve three enzymes, a hydroxysterol oxidase-like enzyme, the quinone-oxidase prx3 that forms the quinone-type-structure in the bicyclic nucleus of aristolochene with the C8-oxo group and the C-3 hydroxyl group, and the P450 monooxygenase prx9 that introduces the epoxide at the double bond between carbons 1 and 2. No monoxy or dioxy-intermediates have been reported to be released to the broth, so these three early oxidative reactions may be coupled together. Eremofortin B is further oxidized by another P450 monooxygenase, that introduces a second epoxide between carbons 7 and 11 prior to acetylation to eremofortin A by the acetyltransferase prx11. The second epoxidation may be performed by a second P450 monooxygenase. After the acetylation step, eremofortin A is converted to eremofortin C and then to PR-toxin. First the conversion of eremofortin A to eremofortin C proceeds by oxidation of the side chain of the molecule at C-12 and is catalyzed by the short-chain oxidoreductase prx1. The cytochrome P450 monooxygenase prx8 also plays a role in this step. The primary alcohol formed at C-12 is finally oxidized by the short-chain alcohol dehydrogenase prx4 that forms PR-toxin. The protein is Short-chain dehydrogenase/reductase prx1 of Penicillium rubens (strain ATCC 28089 / DSM 1075 / NRRL 1951 / Wisconsin 54-1255) (Penicillium chrysogenum).